We begin with the raw amino-acid sequence, 325 residues long: Beta-ketoacyl-[acyl-carrier-protein] synthase III (325 aa).

Residues Cys-116 and His-252 contribute to the active site. The segment at 253 to 257 (QANLR) is ACP-binding. Residue Asn-282 is part of the active site.

This sequence belongs to the thiolase-like superfamily. FabH family. In terms of assembly, homodimer.

It is found in the cytoplasm. It carries out the reaction butanoyl-CoA + malonyl-[ACP] + H(+) = 3-oxohexanoyl-[ACP] + CO2 + CoA. The enzyme catalyses hexanoyl-CoA + malonyl-[ACP] + H(+) = 3-oxooctanoyl-[ACP] + CO2 + CoA. The catalysed reaction is octanoyl-CoA + malonyl-[ACP] + H(+) = 3-oxodecanoyl-[ACP] + CO2 + CoA. It catalyses the reaction decanoyl-CoA + malonyl-[ACP] + H(+) = 3-oxododecanoyl-[ACP] + CO2 + CoA. It carries out the reaction 2-methylpropanoyl-CoA + malonyl-[ACP] + H(+) = 4-methyl-3-oxopentanoyl-[ACP] + CO2 + CoA. The enzyme catalyses 3-methylbutanoyl-CoA + malonyl-[ACP] + H(+) = 5-methyl-3-oxohexanoyl-[ACP] + CO2 + CoA. The catalysed reaction is malonyl-[ACP] + acetyl-CoA + H(+) = 3-oxobutanoyl-[ACP] + CO2 + CoA. The protein operates within lipid metabolism; fatty acid biosynthesis. Functionally, catalyzes the condensation reaction of fatty acid synthesis by the addition to an acyl acceptor of two carbons from malonyl-ACP. Catalyzes the first condensation reaction which initiates fatty acid synthesis and may therefore play a role in governing the total rate of fatty acid production. Possesses both acetoacetyl-ACP synthase and acetyl transacylase activities. Can use a wide range of acyl-CoAs as the primer substrate in vitro, with a slight preference for short, medium-straight chain acyl-CoAs. Can also use branched-chain acyl-CoAs and acetyl-CoA. The chain is Beta-ketoacyl-[acyl-carrier-protein] synthase III from Xanthomonas campestris pv. campestris (strain 8004).